The primary structure comprises 580 residues: Mucolipin-1 (580 aa).

The interval M1 to E38 is disordered. Over M1 to K65 the chain is Cytoplasmic. The residue at position 10 (S10) is a Phosphoserine. The Dileucine motif; mediates targeting to lysosomes motif lies at E11–L16. The interaction with phosphoinositides stretch occupies residues R42–K62. The chain crosses the membrane as a helical span at residues L66 to S86. The Extracellular segment spans residues N87 to R298. Residues L107–T121 form an extracellular/lumenal pore loop region. A disulfide bridge links C166 with C192. A glycan (N-linked (GlcNAc...) asparagine) is linked at N230. C253 and C284 are oxidised to a cystine. A helical transmembrane segment spans residues L299–L321. At R322–F350 the chain is on the cytoplasmic side. The helical transmembrane segment at V351 to M371 threads the bilayer. Residues K372 to S382 are Extracellular-facing. Residues Y383 to L405 form a helical membrane-spanning segment. The Cytoplasmic segment spans residues T406–R427. Residues F428–G448 traverse the membrane as a helical segment. The Extracellular portion of the chain corresponds to P449–S456. Positions L457 to F477 form an intramembrane region, pore-forming. Positions N469–F474 match the Selectivity filter motif. At A478 to W491 the chain is on the extracellular side. A helical transmembrane segment spans residues L492–F513. Over I514–N580 the chain is Cytoplasmic. 2 positions are modified to phosphoserine; by PAK: S557 and S559. The required for palmitoylation and association with membranes stretch occupies residues C565 to C567. The Dileucine internalization motif; mediates AP2 complex-dependent internalization motif lies at E573–L578.

This sequence belongs to the transient receptor (TC 1.A.4) family. Polycystin subfamily. MCOLN1 sub-subfamily. Homotetramer. Homooligomer. Can heterooligomerize with MCOLN2 or MCOLN3; heteromeric assemblies have different channel properties as compared to the respective homooligomers and may be tissue-specific. Interacts with PDCD6. Interacts with TMEM163. Interacts with LAPTM4B. Palmitoylated; involved in association with membranes. Post-translationally, phosphorylation by PKA inhibits channel activity. Dephosphorylation increases activity. In terms of processing, proteolytically cleaved probably involving multiple lysosomal proteases including cathepsin B; inhibits lysosomal channel activity. Widely expressed in adult and fetal tissues.

It is found in the late endosome membrane. Its subcellular location is the lysosome membrane. It localises to the cytoplasmic vesicle membrane. The protein resides in the cell projection. The protein localises to the phagocytic cup. It is found in the cytoplasmic vesicle. Its subcellular location is the phagosome membrane. It localises to the cell membrane. The catalysed reaction is Ca(2+)(in) = Ca(2+)(out). It carries out the reaction Fe(2+)(in) = Fe(2+)(out). The enzyme catalyses Mg(2+)(in) = Mg(2+)(out). It catalyses the reaction K(+)(in) = K(+)(out). The catalysed reaction is Na(+)(in) = Na(+)(out). Its activity is regulated as follows. Channel activity is controlled by multiple regulatory mechanisms in different subcellular compartments. Channel function is transiently modulated by changes in Ca(2+) in a pH-dependent manner; pH changes modify the aggregation state of unitary channels; a negative cooperativity between extracellular/lumenal Ca(2+) and H(+) is suggested. Regulated by phosphoinositides in a compartment-specific manner: in lysosomes activated by PtdIns(3,5)P2 (Phosphatidylinositol 3,5-bisphosphate) and at the plasma membrane inhibited by PtdIns(4,5)P2 (Phosphatidylinositol 4,5-bisphosphate). Its function is as follows. Nonselective cation channel probably playing a role in the regulation of membrane trafficking events and of metal homeostasis. Acts as a Ca(2+)-permeable cation channel with inwardly rectifying activity. Proposed to play a major role in Ca(2+) release from late endosome and lysosome vesicles to the cytoplasm, which is important for many lysosome-dependent cellular events, including the fusion and trafficking of these organelles, exocytosis and autophagy. Required for efficient uptake of large particles in macrophages in which Ca(2+) release from the lysosomes triggers lysosomal exocytosis. May also play a role in phagosome-lysosome fusion. Involved in lactosylceramide trafficking indicative for a role in the regulation of late endocytic membrane fusion/fission events. By mediating lysosomal Ca(2+) release is involved in regulation of mTORC1 signaling and in mTOR/TFEB-dependent lysosomal adaptation to environmental cues such as nutrient levels. Seems to act as lysosomal active oxygen species (ROS) sensor involved in ROS-induced TFEB activation and autophagy. Also functions as a Fe(2+) permeable channel in late endosomes and lysosomes. Also permeable to Mg(2+), Na(+). K(+) and Cs(+). Proposed to play a role in zinc homeostasis probably implicating its association with TMEM163 In adaptive immunity, TRPML2 and TRPML1 may play redundant roles in the function of the specialized lysosomes of B cells. May contribute to cellular lipase activity within the late endosomal pathway or at the cell surface which may be involved in processes of membrane reshaping and vesiculation, especially the growth of tubular structures. However, it is not known, whether it conveys the enzymatic activity directly, or merely facilitates the activity of an associated phospholipase. In Homo sapiens (Human), this protein is Mucolipin-1.